Here is a 145-residue protein sequence, read N- to C-terminus: uncharacterized protein (145 aa).

An ACT domain is found at 78–145; that stretch reads KLQIVAKDRI…DVVEKISILW (68 aa).

This is an uncharacterized protein from Methanocaldococcus jannaschii (strain ATCC 43067 / DSM 2661 / JAL-1 / JCM 10045 / NBRC 100440) (Methanococcus jannaschii).